A 133-amino-acid chain; its full sequence is Bacteriohemerythrin (133 aa).

Residues histidine 19, histidine 56, glutamate 60, histidine 75, histidine 79, histidine 115, and aspartate 120 each coordinate Fe cation.

Belongs to the hemerythrin family. In terms of assembly, monomer.

Functionally, oxygen-binding protein. May be involved in a storage mechanism or for delivery to oxygen-requiring enzymes. The oxygen-binding site contains two iron atoms. In Campylobacter jejuni subsp. jejuni serotype O:6 (strain 81116 / NCTC 11828), this protein is Bacteriohemerythrin.